Here is a 341-residue protein sequence, read N- to C-terminus: Holliday junction branch migration complex subunit RuvB (341 aa).

The tract at residues 1–182 (MKDRLISAVA…FGVISRLEYY (182 aa)) is large ATPase domain (RuvB-L). ATP-binding positions include L21, R22, G63, K66, T67, T68, 129-131 (EDY), R172, Y182, and R219. Mg(2+) is bound at residue T67. The segment at 183–253 (RPEDLVLIVN…VAVEALKFLE (71 aa)) is small ATPAse domain (RuvB-S). The head domain (RuvB-H) stretch occupies residues 256 to 341 (PLGLDFADRR…REETDQVSLW (86 aa)). Residues R311 and R316 each coordinate DNA.

The protein belongs to the RuvB family. As to quaternary structure, homohexamer. Forms an RuvA(8)-RuvB(12)-Holliday junction (HJ) complex. HJ DNA is sandwiched between 2 RuvA tetramers; dsDNA enters through RuvA and exits via RuvB. An RuvB hexamer assembles on each DNA strand where it exits the tetramer. Each RuvB hexamer is contacted by two RuvA subunits (via domain III) on 2 adjacent RuvB subunits; this complex drives branch migration. In the full resolvosome a probable DNA-RuvA(4)-RuvB(12)-RuvC(2) complex forms which resolves the HJ.

It localises to the cytoplasm. It catalyses the reaction ATP + H2O = ADP + phosphate + H(+). Its function is as follows. The RuvA-RuvB-RuvC complex processes Holliday junction (HJ) DNA during genetic recombination and DNA repair, while the RuvA-RuvB complex plays an important role in the rescue of blocked DNA replication forks via replication fork reversal (RFR). RuvA specifically binds to HJ cruciform DNA, conferring on it an open structure. The RuvB hexamer acts as an ATP-dependent pump, pulling dsDNA into and through the RuvAB complex. RuvB forms 2 homohexamers on either side of HJ DNA bound by 1 or 2 RuvA tetramers; 4 subunits per hexamer contact DNA at a time. Coordinated motions by a converter formed by DNA-disengaged RuvB subunits stimulates ATP hydrolysis and nucleotide exchange. Immobilization of the converter enables RuvB to convert the ATP-contained energy into a lever motion, pulling 2 nucleotides of DNA out of the RuvA tetramer per ATP hydrolyzed, thus driving DNA branch migration. The RuvB motors rotate together with the DNA substrate, which together with the progressing nucleotide cycle form the mechanistic basis for DNA recombination by continuous HJ branch migration. Branch migration allows RuvC to scan DNA until it finds its consensus sequence, where it cleaves and resolves cruciform DNA. This Pelotomaculum thermopropionicum (strain DSM 13744 / JCM 10971 / SI) protein is Holliday junction branch migration complex subunit RuvB.